The primary structure comprises 627 residues: Threonine--tRNA ligase (627 aa).

The catalytic stretch occupies residues D221–P523. Zn(2+)-binding residues include C319, H370, and H500.

The protein belongs to the class-II aminoacyl-tRNA synthetase family. As to quaternary structure, homodimer. The cofactor is Zn(2+).

It localises to the cytoplasm. The catalysed reaction is tRNA(Thr) + L-threonine + ATP = L-threonyl-tRNA(Thr) + AMP + diphosphate + H(+). Its function is as follows. Catalyzes the attachment of threonine to tRNA(Thr) in a two-step reaction: L-threonine is first activated by ATP to form Thr-AMP and then transferred to the acceptor end of tRNA(Thr). Also edits incorrectly charged L-seryl-tRNA(Thr). The chain is Threonine--tRNA ligase from Gloeobacter violaceus (strain ATCC 29082 / PCC 7421).